A 337-amino-acid chain; its full sequence is Heme A synthase (337 aa).

5 helical membrane-spanning segments follow: residues 6-26 (ITKWLFVSCIMVIAMVVIGGI), 87-107 (FIHRLLGRMTVLIYIVPLIYF), 119-139 (LPYIIALLLFCVQGFMGWYMV), 154-174 (LAFHLIIAVIIYHILFYQLIK), and 192-212 (LIFSGIAITVIYVQIFLGALV). His-256 lines the heme pocket. 3 helical membrane passes run 258 to 278 (LGSYSVFLVVVVLVICLLTIE), 285 to 305 (IAYFLMIALLMQISTGIITLL), and 308 to 328 (VPIIIASIHQLFAIILLSIII). His-316 contributes to the heme binding site.

It belongs to the COX15/CtaA family. Type 2 subfamily. As to quaternary structure, interacts with CtaB. Heme b serves as cofactor.

The protein resides in the cell membrane. It carries out the reaction Fe(II)-heme o + 2 A + H2O = Fe(II)-heme a + 2 AH2. Its pathway is porphyrin-containing compound metabolism; heme A biosynthesis; heme A from heme O: step 1/1. Functionally, catalyzes the conversion of heme O to heme A by two successive hydroxylations of the methyl group at C8. The first hydroxylation forms heme I, the second hydroxylation results in an unstable dihydroxymethyl group, which spontaneously dehydrates, resulting in the formyl group of heme A. This is Heme A synthase from Rickettsia akari (strain Hartford).